Consider the following 225-residue polypeptide: Proteoglycan 3 (225 aa).

The first 17 residues, Met1 to Ala17, serve as a signal peptide directing secretion. Residues Cys107 to Ser224 form the C-type lectin domain. Cystine bridges form between Cys128–Cys223 and Cys200–Cys215.

In terms of tissue distribution, expressed in bone marrow. Not detected in placenta.

The protein resides in the cytoplasmic granule. Its function is as follows. Possesses similar cytotoxic and cytostimulatory activities to PRG2/MBP. In vitro, stimulates neutrophil superoxide production and IL8 release, and histamine and leukotriene C4 release from basophils. This is Proteoglycan 3 from Homo sapiens (Human).